We begin with the raw amino-acid sequence, 373 residues long: Anhydro-N-acetylmuramic acid kinase (373 aa).

13–20 is a binding site for ATP; sequence GTSMDGID.

It belongs to the anhydro-N-acetylmuramic acid kinase family.

The enzyme catalyses 1,6-anhydro-N-acetyl-beta-muramate + ATP + H2O = N-acetyl-D-muramate 6-phosphate + ADP + H(+). Its pathway is amino-sugar metabolism; 1,6-anhydro-N-acetylmuramate degradation. It participates in cell wall biogenesis; peptidoglycan recycling. Its function is as follows. Catalyzes the specific phosphorylation of 1,6-anhydro-N-acetylmuramic acid (anhMurNAc) with the simultaneous cleavage of the 1,6-anhydro ring, generating MurNAc-6-P. Is required for the utilization of anhMurNAc either imported from the medium or derived from its own cell wall murein, and thus plays a role in cell wall recycling. In Brucella abortus (strain 2308), this protein is Anhydro-N-acetylmuramic acid kinase.